Here is a 366-residue protein sequence, read N- to C-terminus: MSVSITKKFYKLDINRTEWEIPDIYQDLQPVGSGAYGQVSKAVVRGTNMHVAIKKLARPFQSAVHAKRTYRELRLLKHMDHENVIGLLDIFHPHPANGSLENFQQVYLVTHLMDADLNNIIRMQHLSDDHVQFLVYQILRGLKYIHSAGVIHRDLKPSNIAVNEDCELRILDFGLARPTENEMTGYVATRWYRAPEIMLNWMHYDQTVDIWSVGCIMAELITRRTLFPGTDHIHQLNLIMEMLGTPPAEFLKKISSESARSYIQSLPPMKGRSFKNVFKNANPLAIDLLEKMLELDAEKRITAEEALSHPYLEKYAEPSVEQTSPPYDHSFEDMDLPVDKWKELIYKEVTNFKPPPSYAQVLKDVK.

In terms of domain architecture, Protein kinase spans 25 to 312 (YQDLQPVGSG…AEEALSHPYL (288 aa)). ATP is bound by residues 31-39 (VGSGAYGQV) and Lys54. The Proton acceptor role is filled by Asp154. The residue at position 184 (Thr184) is a Phosphothreonine. Positions 184–186 (TGY) match the TXY motif. A Phosphotyrosine modification is found at Tyr186.

It belongs to the protein kinase superfamily. CMGC Ser/Thr protein kinase family. MAP kinase subfamily. The cofactor is Mg(2+). In terms of processing, dually phosphorylated on Thr-184 and Tyr-186, which activates the enzyme.

The protein resides in the nucleus. It catalyses the reaction L-seryl-[protein] + ATP = O-phospho-L-seryl-[protein] + ADP + H(+). It carries out the reaction L-threonyl-[protein] + ATP = O-phospho-L-threonyl-[protein] + ADP + H(+). Its activity is regulated as follows. Activated by threonine and tyrosine phosphorylation by Mkk3 in response to environmental stress. Its function is as follows. Kinase involved in a signal transduction pathway. May down-regulate insect immunity gene expression after prolonged infection. In Drosophila melanogaster (Fruit fly), this protein is Mitogen-activated protein kinase p38a.